Reading from the N-terminus, the 226-residue chain is NAD(P)H-quinone oxidoreductase subunit K, chloroplastic (226 aa).

Residues C43, C44, C108, and C139 each contribute to the [4Fe-4S] cluster site.

This sequence belongs to the complex I 20 kDa subunit family. NDH is composed of at least 16 different subunits, 5 of which are encoded in the nucleus. [4Fe-4S] cluster is required as a cofactor.

Its subcellular location is the plastid. It localises to the chloroplast thylakoid membrane. The catalysed reaction is a plastoquinone + NADH + (n+1) H(+)(in) = a plastoquinol + NAD(+) + n H(+)(out). It catalyses the reaction a plastoquinone + NADPH + (n+1) H(+)(in) = a plastoquinol + NADP(+) + n H(+)(out). NDH shuttles electrons from NAD(P)H:plastoquinone, via FMN and iron-sulfur (Fe-S) centers, to quinones in the photosynthetic chain and possibly in a chloroplast respiratory chain. The immediate electron acceptor for the enzyme in this species is believed to be plastoquinone. Couples the redox reaction to proton translocation, and thus conserves the redox energy in a proton gradient. This chain is NAD(P)H-quinone oxidoreductase subunit K, chloroplastic, found in Lupinus luteus (European yellow lupine).